Consider the following 869-residue polypeptide: Bifunctional uridylyltransferase/uridylyl-removing enzyme (869 aa).

The uridylyltransferase stretch occupies residues 1 to 332; that stretch reads MTATPADRPD…QFDGEAVPVQ (332 aa). The tract at residues 333-691 is uridylyl-removing; sequence LDAGFSLRRG…RRAVPDNDAL (359 aa). The HD domain maps to 450-572; that stretch reads VDQHTLMVLR…VGTRERLDYL (123 aa). 2 consecutive ACT domains span residues 692–771 and 798–869; these read EVFV…PSRR and RISL…LDPT.

It belongs to the GlnD family. Requires Mg(2+) as cofactor.

It catalyses the reaction [protein-PII]-L-tyrosine + UTP = [protein-PII]-uridylyl-L-tyrosine + diphosphate. It carries out the reaction [protein-PII]-uridylyl-L-tyrosine + H2O = [protein-PII]-L-tyrosine + UMP + H(+). Its activity is regulated as follows. Uridylyltransferase (UTase) activity is inhibited by glutamine, while glutamine activates uridylyl-removing (UR) activity. Modifies, by uridylylation and deuridylylation, the PII regulatory proteins (GlnB and homologs), in response to the nitrogen status of the cell that GlnD senses through the glutamine level. Under low glutamine levels, catalyzes the conversion of the PII proteins and UTP to PII-UMP and PPi, while under higher glutamine levels, GlnD hydrolyzes PII-UMP to PII and UMP (deuridylylation). Thus, controls uridylylation state and activity of the PII proteins, and plays an important role in the regulation of nitrogen assimilation and metabolism. The chain is Bifunctional uridylyltransferase/uridylyl-removing enzyme from Xanthomonas campestris pv. campestris (strain 8004).